The following is a 1201-amino-acid chain: Protein dduB (1201 aa).

Residues 1–22 (MKFIKYLLILFLILKINYFVES) form the signal peptide. Topologically, residues 23–1180 (GVDCQKNTEY…QDPSDELSTS (1158 aa)) are extracellular. N-linked (GlcNAc...) asparagine glycosylation is found at Asn-68, Asn-122, Asn-150, Asn-185, Asn-283, Asn-348, Asn-360, Asn-437, Asn-448, Asn-518, Asn-535, Asn-554, Asn-585, Asn-631, Asn-759, Asn-815, Asn-830, Asn-844, Asn-946, Asn-1042, Asn-1058, Asn-1098, and Asn-1108. The chain crosses the membrane as a helical span at residues 1181 to 1201 (SFIQLNILSLLLISIFTIFIL).

The protein localises to the membrane. This Dictyostelium discoideum (Social amoeba) protein is Protein dduB (dduB).